Reading from the N-terminus, the 479-residue chain is Proline--tRNA ligase (479 aa).

This sequence belongs to the class-II aminoacyl-tRNA synthetase family. ProS type 3 subfamily. In terms of assembly, homodimer.

It localises to the cytoplasm. It carries out the reaction tRNA(Pro) + L-proline + ATP = L-prolyl-tRNA(Pro) + AMP + diphosphate. In terms of biological role, catalyzes the attachment of proline to tRNA(Pro) in a two-step reaction: proline is first activated by ATP to form Pro-AMP and then transferred to the acceptor end of tRNA(Pro). This is Proline--tRNA ligase from Agathobacter rectalis (strain ATCC 33656 / DSM 3377 / JCM 17463 / KCTC 5835 / VPI 0990) (Eubacterium rectale).